Reading from the N-terminus, the 390-residue chain is S-adenosylmethionine synthase 2 (390 aa).

Glu9 lines the Mg(2+) pocket. Residue His15 coordinates ATP. Position 43 (Glu43) interacts with K(+). 2 residues coordinate L-methionine: Glu56 and Gln99. Residues 167–169 (DGK), 235–238 (SGRF), Asp246, 252–253 (RK), Ala269, Lys273, and Lys277 contribute to the ATP site. Asp246 contributes to the L-methionine binding site. Lys277 is an L-methionine binding site.

It belongs to the AdoMet synthase family. Homotetramer. Mn(2+) serves as cofactor. Requires Mg(2+) as cofactor. It depends on Co(2+) as a cofactor. The cofactor is K(+).

The protein localises to the cytoplasm. It carries out the reaction L-methionine + ATP + H2O = S-adenosyl-L-methionine + phosphate + diphosphate. It participates in amino-acid biosynthesis; S-adenosyl-L-methionine biosynthesis; S-adenosyl-L-methionine from L-methionine: step 1/1. Catalyzes the formation of S-adenosylmethionine from methionine and ATP. The reaction comprises two steps that are both catalyzed by the same enzyme: formation of S-adenosylmethionine (AdoMet) and triphosphate, and subsequent hydrolysis of the triphosphate. In Petunia hybrida (Petunia), this protein is S-adenosylmethionine synthase 2 (SAM2).